Consider the following 86-residue polypeptide: Cell division topological specificity factor (86 aa).

Belongs to the MinE family.

In terms of biological role, prevents the cell division inhibition by proteins MinC and MinD at internal division sites while permitting inhibition at polar sites. This ensures cell division at the proper site by restricting the formation of a division septum at the midpoint of the long axis of the cell. The polypeptide is Cell division topological specificity factor (Azoarcus sp. (strain BH72)).